Reading from the N-terminus, the 339-residue chain is DNA-directed RNA polymerase subunit alpha (339 aa).

Residues 1-233 (MVREEVAGST…DLFLPFLHAE (233 aa)) form an alpha N-terminal domain (alpha-NTD) region. The tract at residues 264 to 339 (KKGIPLNCIF…IDLLKNKLSF (76 aa)) is alpha C-terminal domain (alpha-CTD).

Belongs to the RNA polymerase alpha chain family. In terms of assembly, in plastids the minimal PEP RNA polymerase catalytic core is composed of four subunits: alpha, beta, beta', and beta''. When a (nuclear-encoded) sigma factor is associated with the core the holoenzyme is formed, which can initiate transcription.

The protein localises to the plastid. It localises to the chloroplast. The enzyme catalyses RNA(n) + a ribonucleoside 5'-triphosphate = RNA(n+1) + diphosphate. In terms of biological role, DNA-dependent RNA polymerase catalyzes the transcription of DNA into RNA using the four ribonucleoside triphosphates as substrates. This is DNA-directed RNA polymerase subunit alpha from Psathyrostachys stoloniformis.